We begin with the raw amino-acid sequence, 691 residues long: DNA ligase (691 aa).

NAD(+) contacts are provided by residues 41–45 (DAEYD), 90–91 (SL), and glutamate 130. The active-site N6-AMP-lysine intermediate is the lysine 132. Positions 153, 190, 307, and 331 each coordinate NAD(+). Zn(2+)-binding residues include cysteine 425, cysteine 428, cysteine 443, and cysteine 449. Residues 610 to 691 (APQGVLAGKT…LHQLLEGNTP (82 aa)) form the BRCT domain.

Belongs to the NAD-dependent DNA ligase family. LigA subfamily. The cofactor is Mg(2+). Mn(2+) is required as a cofactor.

It carries out the reaction NAD(+) + (deoxyribonucleotide)n-3'-hydroxyl + 5'-phospho-(deoxyribonucleotide)m = (deoxyribonucleotide)n+m + AMP + beta-nicotinamide D-nucleotide.. Functionally, DNA ligase that catalyzes the formation of phosphodiester linkages between 5'-phosphoryl and 3'-hydroxyl groups in double-stranded DNA using NAD as a coenzyme and as the energy source for the reaction. It is essential for DNA replication and repair of damaged DNA. The polypeptide is DNA ligase (Burkholderia ambifaria (strain ATCC BAA-244 / DSM 16087 / CCUG 44356 / LMG 19182 / AMMD) (Burkholderia cepacia (strain AMMD))).